The following is a 379-amino-acid chain: MNSSVQGYRRVVVKLGTSVLTSGSKSLDKAHMVELARQMAGLMKSGVEVVLVTSGAIAAGREHLGYPVLPDTMANKQLLAAVGQSQLILAWSQLFSIYGLHVGQLLLTRADLHDRERYLNARDTLNALLAQGIVPIINENDAVATTEIKVGDNDNLSARAALLCDADLLMLLTDQKGLFDADPRKEPNARLIPEVEHIDDSLRLLAGGSVSGLGTGGMATKLQAADIARRAGVEVIIASGHHPEVIKKAVHREAVGTRFLAIESPLESRKQWILAGPKAKGRLLLDIGAVAAVTCRGRSLLSKGITGVEGQFERGDTLELVSPDGRVVARGMARYQSQALNLIAGKHSDEIEPLLGYDYGDAVVHRNDMVVLEMIGEAK.

Residue K14 coordinates ATP. Positions 54, 141, and 153 each coordinate substrate. ATP contacts are provided by residues 173–174 and 215–221; these read TD and TGGMATK. The region spanning 280–358 is the PUA domain; that stretch reads KGRLLLDIGA…DEIEPLLGYD (79 aa).

It belongs to the glutamate 5-kinase family.

Its subcellular location is the cytoplasm. The catalysed reaction is L-glutamate + ATP = L-glutamyl 5-phosphate + ADP. The protein operates within amino-acid biosynthesis; L-proline biosynthesis; L-glutamate 5-semialdehyde from L-glutamate: step 1/2. Functionally, catalyzes the transfer of a phosphate group to glutamate to form L-glutamate 5-phosphate. In Shewanella amazonensis (strain ATCC BAA-1098 / SB2B), this protein is Glutamate 5-kinase.